Here is a 227-residue protein sequence, read N- to C-terminus: uncharacterized protein (227 aa).

2 helical membrane-spanning segments follow: residues 113-133 (IMLI…FIVF) and 141-161 (FGIC…NGLI).

The protein resides in the membrane. This is an uncharacterized protein from Dictyostelium discoideum (Social amoeba).